Consider the following 315-residue polypeptide: Shiga toxin subunit A (315 aa).

The signal sequence occupies residues methionine 1 to alanine 22. Residues lysine 23–arginine 273 form an A1 region. Glutamate 189 is a catalytic residue. Residues cysteine 264 and cysteine 283 are joined by a disulfide bond. Residues methionine 274–serine 315 are A2.

Belongs to the ribosome-inactivating protein family. Shiga toxin contains a single subunit A and five copies of subunit B.

It catalyses the reaction Endohydrolysis of the N-glycosidic bond at one specific adenosine on the 28S rRNA.. Its function is as follows. The A subunit is responsible for inhibiting protein synthesis through the catalytic inactivation of 60S ribosomal subunits. After endocytosis, the A subunit is cleaved by furin in two fragments, A1 and A2: A1 is the catalytically active fragment, and A2 is essential for holotoxin assembly with the B subunits. The sequence is that of Shiga toxin subunit A (stxA) from Shigella sonnei (Shigella sonnei bacteriophage 7888).